We begin with the raw amino-acid sequence, 692 residues long: Threonine--tRNA ligase (692 aa).

A disordered region spans residues Met1 to Arg20. Residues Met1–Ala74 enclose the TGS domain. The segment at Asp269–Pro575 is catalytic. Zn(2+)-binding residues include Cys374, His425, and His552.

Belongs to the class-II aminoacyl-tRNA synthetase family. In terms of assembly, homodimer. Zn(2+) is required as a cofactor.

The protein resides in the cytoplasm. It carries out the reaction tRNA(Thr) + L-threonine + ATP = L-threonyl-tRNA(Thr) + AMP + diphosphate + H(+). Its function is as follows. Catalyzes the attachment of threonine to tRNA(Thr) in a two-step reaction: L-threonine is first activated by ATP to form Thr-AMP and then transferred to the acceptor end of tRNA(Thr). Also edits incorrectly charged L-seryl-tRNA(Thr). In Mycobacterium tuberculosis (strain CDC 1551 / Oshkosh), this protein is Threonine--tRNA ligase.